The sequence spans 588 residues: DNA ligase (588 aa).

Residue Glu-250 participates in ATP binding. Lys-252 serves as the catalytic N6-AMP-lysine intermediate. ATP is bound by residues Arg-257, Arg-272, Glu-302, Phe-342, Arg-417, and Lys-423.

This sequence belongs to the ATP-dependent DNA ligase family. The cofactor is Mg(2+).

It catalyses the reaction ATP + (deoxyribonucleotide)n-3'-hydroxyl + 5'-phospho-(deoxyribonucleotide)m = (deoxyribonucleotide)n+m + AMP + diphosphate.. In terms of biological role, DNA ligase that seals nicks in double-stranded DNA during DNA replication, DNA recombination and DNA repair. In Nitrosopumilus maritimus (strain SCM1), this protein is DNA ligase.